A 121-amino-acid chain; its full sequence is Trypsin/alpha-amylase inhibitor CMX2 (121 aa).

Positions 1-24 are cleaved as a signal peptide; the sequence is MAFKHQLILSTAILLAVLAAASAS.

This sequence belongs to the protease inhibitor I6 (cereal trypsin/alpha-amylase inhibitor) family.

It localises to the secreted. This chain is Trypsin/alpha-amylase inhibitor CMX2, found in Triticum aestivum (Wheat).